A 336-amino-acid chain; its full sequence is Di/tripeptide transport system permease protein DppB (336 aa).

6 consecutive transmembrane segments (helical) span residues 10-30, 102-122, 145-165, 198-218, 257-277, and 307-327; these read GLLI…IRLI, LSLA…VIAA, IFWW…WTPV, AVRH…AVIA, LIPV…GAVL, and ILLV…LYGL. The ABC transmembrane type-1 domain maps to 96-325; it reads FPATLELSLA…LVNFVVDILY (230 aa).

Belongs to the binding-protein-dependent transport system permease family. OppBC subfamily. As to quaternary structure, the complex is composed of two ATP-binding proteins (DppD and DppF), two transmembrane proteins (DppB and DppC) and a solute-binding protein (DppA1-A5). Five orthologous SBPs (DppA1-A5) are present in P.aeruginosa, which increases the substrate specificity of the DppBCDF transporter.

The protein localises to the cell inner membrane. Functionally, part of the ABC transporter DppABCDF involved in the uptake of various di/tripeptides. Is also involved in the uptake of phaseolotoxin, a toxic tripeptide inhibiting the enzyme ornithine carbamoyltransferase. Responsible for the translocation of the substrate across the membrane. In Pseudomonas aeruginosa (strain UCBPP-PA14), this protein is Di/tripeptide transport system permease protein DppB.